The sequence spans 226 residues: MAWMIRDVPKDSRPRERLLSSGPESLSDHELIAILLRTGTKEESVVQLAQRLLRHFEGLRPLKDATVEEMTNIKGIGPTKAVQILAALELGRRIHQSGCADRYVIRCPEDGAKYVMEDMRFLSQEHFVAIYLNTKNQVIYRKTVFIGSLNASIVHPREVFKEAIKRSAASVICVHNHPSGDPTPSREDIDVTKRLAECGRIIGIELLDHLIIGDQKFISLKEKGYV.

Residues 104 to 226 enclose the MPN domain; sequence VIRCPEDGAK…FISLKEKGYV (123 aa). 3 residues coordinate Zn(2+): H175, H177, and D188. Positions 175-188 match the JAMM motif motif; the sequence is HNHPSGDPTPSRED.

The protein belongs to the UPF0758 family.

This chain is UPF0758 protein GK2618, found in Geobacillus kaustophilus (strain HTA426).